The primary structure comprises 372 residues: Sesquiterpene synthase Agr9 (372 aa).

Mg(2+) is bound by residues Asp-87, Asn-225, Ser-229, and Glu-233. The DDXXD motif signature appears at 87 to 91 (DEYTD). The (2E,6E)-farnesyl diphosphate site is built by Arg-314 and Tyr-315.

It belongs to the terpene synthase family. Mg(2+) is required as a cofactor.

It carries out the reaction (2E,6E)-farnesyl diphosphate = gamma-muurolene + diphosphate. The catalysed reaction is (2E,6E)-farnesyl diphosphate = delta-cadinene + diphosphate. Terpene cyclase that catalyzes the cyclization of farnesyl diphosphate (FPP) to various sesquiterpenes, including gamma-muurolene, beta-cadinene and delta-cadinene. This is Sesquiterpene synthase Agr9 from Cyclocybe aegerita (Black poplar mushroom).